The following is a 394-amino-acid chain: Carbamoyl phosphate synthase small chain (394 aa).

Positions 1-188 (MIRKERAILA…PLPYAFPTLR (188 aa)) are CPSase. Residues serine 49, glycine 240, and glycine 242 each contribute to the L-glutamine site. The 188-residue stretch at 192 to 379 (RVVLMDFGIK…IEEIDAFEGA (188 aa)) folds into the Glutamine amidotransferase type-1 domain. Cysteine 267 acts as the Nucleophile in catalysis. Leucine 268, glutamine 271, asparagine 309, glycine 311, and tyrosine 312 together coordinate L-glutamine. Active-site residues include histidine 352 and glutamate 354.

Belongs to the CarA family. Composed of two chains; the small (or glutamine) chain promotes the hydrolysis of glutamine to ammonia, which is used by the large (or ammonia) chain to synthesize carbamoyl phosphate. Tetramer of heterodimers (alpha,beta)4.

It catalyses the reaction hydrogencarbonate + L-glutamine + 2 ATP + H2O = carbamoyl phosphate + L-glutamate + 2 ADP + phosphate + 2 H(+). The catalysed reaction is L-glutamine + H2O = L-glutamate + NH4(+). It functions in the pathway amino-acid biosynthesis; L-arginine biosynthesis; carbamoyl phosphate from bicarbonate: step 1/1. It participates in pyrimidine metabolism; UMP biosynthesis via de novo pathway; (S)-dihydroorotate from bicarbonate: step 1/3. Small subunit of the glutamine-dependent carbamoyl phosphate synthetase (CPSase). CPSase catalyzes the formation of carbamoyl phosphate from the ammonia moiety of glutamine, carbonate, and phosphate donated by ATP, constituting the first step of 2 biosynthetic pathways, one leading to arginine and/or urea and the other to pyrimidine nucleotides. The small subunit (glutamine amidotransferase) binds and cleaves glutamine to supply the large subunit with the substrate ammonia. The protein is Carbamoyl phosphate synthase small chain of Deinococcus geothermalis (strain DSM 11300 / CIP 105573 / AG-3a).